The sequence spans 512 residues: Secreted triacylglycerol lipase LIP5 (512 aa).

A signal peptide spans 1-17 (MMYASLVHWLALAVALA). Residues Cys118 and Cys292 are joined by a disulfide bond. The active-site Nucleophile is Ser203. Asn316 carries N-linked (GlcNAc...) asparagine glycosylation. The active site involves Asp352. N-linked (GlcNAc...) asparagine glycosylation occurs at Asn361. Residue His386 is part of the active site. A glycan (N-linked (GlcNAc...) asparagine) is linked at Asn453. The interval 480 to 512 (KGDISPGEGGDHTKESKKAAAKFKAEKKHGKHH) is disordered. The segment covering 488 to 497 (GGDHTKESKK) has biased composition (basic and acidic residues). The segment covering 498–512 (AAAKFKAEKKHGKHH) has biased composition (basic residues).

The protein belongs to the AB hydrolase superfamily. Lipase family. Class Lip subfamily.

The protein localises to the secreted. The catalysed reaction is a triacylglycerol + H2O = a diacylglycerol + a fatty acid + H(+). The enzyme catalyses a monoacylglycerol + H2O = glycerol + a fatty acid + H(+). It catalyses the reaction a diacylglycerol + H2O = a monoacylglycerol + a fatty acid + H(+). Its function is as follows. Secreted lipase that hydrolyzes acylglycerol lipids such as triacylglycerols and consequently releases free fatty acid. Can hydrolyze 4-nitrophenyl palmitate to release 4-nitrophenol and palmitoic acid. Due to an absence of fatty acid synthase genes in Malassezia species, secretory lipases are essential for the yeast to generate free fatty acids from degradation of sebum and assimilate them as lipid sources for growth. Plays an essential role at the pathogen-host interface during disease progression. The sequence is that of Secreted triacylglycerol lipase LIP5 from Malassezia restricta (strain ATCC 96810 / NBRC 103918 / CBS 7877) (Seborrheic dermatitis infection agent).